A 493-amino-acid polypeptide reads, in one-letter code: Xaa-Pro dipeptidase (493 aa).

An N-acetylalanine modification is found at Ala2. The residue at position 167 (Ser167) is a Phosphoserine. A dipeptide is bound at residue His255. Mn(2+) is bound by residues Asp276, Asp287, and His370. An a dipeptide-binding site is contributed by Asp287. The a dipeptide site is built by His377 and Arg398. 2 residues coordinate Mn(2+): Glu412 and Glu452.

This sequence belongs to the peptidase M24B family. Eukaryotic-type prolidase subfamily. In terms of assembly, homodimer. It depends on Mn(2+) as a cofactor.

It catalyses the reaction Xaa-L-Pro dipeptide + H2O = an L-alpha-amino acid + L-proline. Its activity is regulated as follows. Specifically inhibited by the pseudodipeptide CQ31. Inhibition by CQ31 indirectly activates the CARD8 inflammasome: dipeptide accumulation following PEPD inactivation weaky inhibit dipeptidyl peptidases DDP8 and DPP9, relieving DPP8- and/or DPP9-mediated inhibition of CARD8. In terms of biological role, dipeptidase that catalyzes the hydrolysis of dipeptides with a prolyl (Xaa-Pro) or hydroxyprolyl residue in the C-terminal position. The preferred dipeptide substrate is Gly-Pro, but other Xaa-Pro dipeptides, such as Ala-Pro, Met-Pro, Phe-Pro, Val-Pro and Leu-Pro, can be cleaved. Plays an important role in collagen metabolism because the high level of iminoacids in collagen. In Homo sapiens (Human), this protein is Xaa-Pro dipeptidase.